The primary structure comprises 337 residues: tRNA N6-adenosine threonylcarbamoyltransferase (337 aa).

Histidine 111 and histidine 115 together coordinate Fe cation. Substrate is bound by residues 134-138 (LVSGG), aspartate 167, glycine 180, and asparagine 272. A Fe cation-binding site is contributed by aspartate 300.

Belongs to the KAE1 / TsaD family. It depends on Fe(2+) as a cofactor.

Its subcellular location is the cytoplasm. It carries out the reaction L-threonylcarbamoyladenylate + adenosine(37) in tRNA = N(6)-L-threonylcarbamoyladenosine(37) in tRNA + AMP + H(+). Its function is as follows. Required for the formation of a threonylcarbamoyl group on adenosine at position 37 (t(6)A37) in tRNAs that read codons beginning with adenine. Is involved in the transfer of the threonylcarbamoyl moiety of threonylcarbamoyl-AMP (TC-AMP) to the N6 group of A37, together with TsaE and TsaB. TsaD likely plays a direct catalytic role in this reaction. The chain is tRNA N6-adenosine threonylcarbamoyltransferase from Escherichia coli O45:K1 (strain S88 / ExPEC).